Consider the following 355-residue polypeptide: Probable sugar phosphate/phosphate translocator At3g10290 (355 aa).

A disordered region spans residues 19-51; sequence QKKQPNLSISSTTKMNKKNPDQKSDMSSSSSSP. A compositionally biased stretch (polar residues) spans 22-32; the sequence is QPNLSISSTTK. Transmembrane regions (helical) follow at residues 55 to 75, 89 to 109, 124 to 144, 150 to 170, 177 to 197, 198 to 218, 239 to 259, 277 to 297, 305 to 325, and 328 to 348; these read TLFI…VLLL, IFLT…SIVF, FLKV…GNIS, VSFN…FAYI, AWVT…ASGG, EPGF…ARAF, LMLY…IFME, YILL…NFLV, TLQV…ILLF, and PVTV…VAYG.

The protein belongs to the TPT transporter family. TPT (TC 2.A.7.9) subfamily.

Its subcellular location is the membrane. The polypeptide is Probable sugar phosphate/phosphate translocator At3g10290 (Arabidopsis thaliana (Mouse-ear cress)).